The sequence spans 520 residues: Amine oxidase [flavin-containing] B (520 aa).

An N-acetylserine modification is found at Ser2. The Cytoplasmic segment spans residues 2–489 (SNKCDVVVVG…TFLERHLPSV (488 aa)). At Lys52 the chain carries N6-acetyllysine. Cys397 is subject to S-8alpha-FAD cysteine. A helical; Anchor for type IV membrane protein transmembrane segment spans residues 490 to 516 (PGLLRLIGLTTIFSATALGFLAHKRGL). The Mitochondrial intermembrane portion of the chain corresponds to 517-520 (LVRV).

As to quaternary structure, monomer, homo- or heterodimer (containing two subunits of similar size). Each subunit contains a covalently bound flavin. Enzymatically active as monomer. Requires FAD as cofactor.

It localises to the mitochondrion outer membrane. The enzyme catalyses a secondary aliphatic amine + O2 + H2O = a primary amine + an aldehyde + H2O2. It carries out the reaction (R)-adrenaline + O2 + H2O = (R)-3,4-dihydroxymandelaldehyde + methylamine + H2O2. The catalysed reaction is a primary methyl amine + O2 + H2O = an aldehyde + H2O2 + NH4(+). It catalyses the reaction benzylamine + O2 + H2O = benzaldehyde + H2O2 + NH4(+). The enzyme catalyses dopamine + O2 + H2O = 3,4-dihydroxyphenylacetaldehyde + H2O2 + NH4(+). It carries out the reaction tyramine + O2 + H2O = (4-hydroxyphenyl)acetaldehyde + H2O2 + NH4(+). The catalysed reaction is (R)-noradrenaline + O2 + H2O = (R)-3,4-dihydroxymandelaldehyde + H2O2 + NH4(+). It catalyses the reaction 2-phenylethylamine + O2 + H2O = 2-phenylacetaldehyde + H2O2 + NH4(+). The enzyme catalyses N-acetylputrescine + O2 + H2O = 4-acetamidobutanal + H2O2 + NH4(+). With respect to regulation, inhibited by deprenyl. In terms of biological role, catalyzes the oxidative deamination of primary and some secondary amines such as neurotransmitters, and exogenous amines including the tertiary amine, neurotoxin 1-methyl-4-phenyl-1,2,3,6-tetrahydropyridine (MPTP), with concomitant reduction of oxygen to hydrogen peroxide and participates in the metabolism of neuroactive and vasoactive amines in the central nervous system and peripheral tissues. Preferentially degrades benzylamine and phenylethylamine. In Homo sapiens (Human), this protein is Amine oxidase [flavin-containing] B.